Here is a 495-residue protein sequence, read N- to C-terminus: 3-octaprenyl-4-hydroxybenzoate carboxy-lyase (495 aa).

A Mn(2+)-binding site is contributed by Asn172. Prenylated FMN contacts are provided by residues 175–177 (IYR), 189–191 (RWL), and 194–195 (RG). Glu238 lines the Mn(2+) pocket. Asp287 acts as the Proton donor in catalysis.

This sequence belongs to the UbiD family. In terms of assembly, homohexamer. Requires prenylated FMN as cofactor. The cofactor is Mn(2+).

The protein resides in the cell membrane. The catalysed reaction is a 4-hydroxy-3-(all-trans-polyprenyl)benzoate + H(+) = a 2-(all-trans-polyprenyl)phenol + CO2. The protein operates within cofactor biosynthesis; ubiquinone biosynthesis. Its function is as follows. Catalyzes the decarboxylation of 3-octaprenyl-4-hydroxy benzoate to 2-octaprenylphenol, an intermediate step in ubiquinone biosynthesis. In Edwardsiella ictaluri (strain 93-146), this protein is 3-octaprenyl-4-hydroxybenzoate carboxy-lyase.